A 309-amino-acid chain; its full sequence is Tagatose-6-phosphate kinase 1 (309 aa).

Belongs to the carbohydrate kinase PfkB family. LacC subfamily.

The enzyme catalyses D-tagatofuranose 6-phosphate + ATP = D-tagatofuranose 1,6-bisphosphate + ADP + H(+). Its pathway is carbohydrate metabolism; D-tagatose 6-phosphate degradation; D-glyceraldehyde 3-phosphate and glycerone phosphate from D-tagatose 6-phosphate: step 1/2. The chain is Tagatose-6-phosphate kinase 1 from Streptococcus agalactiae serotype III (strain NEM316).